Here is a 66-residue protein sequence, read N- to C-terminus: Large ribosomal subunit protein bL32 (66 aa).

It belongs to the bacterial ribosomal protein bL32 family.

This is Large ribosomal subunit protein bL32 from Rickettsia canadensis (strain McKiel).